Here is a 38-residue protein sequence, read N- to C-terminus: Spheniscin-1 (38 aa).

3 disulfide bridges follow: Cys-5-Cys-33, Cys-12-Cys-27, and Cys-17-Cys-34.

As to quaternary structure, monomer. As to expression, secreted into the stomach cavity.

The protein localises to the secreted. In terms of biological role, has antifungal activity and antibacterial activity against Gram-positive and Gram-negative bacteria. Involved in the process of food preservation in the stomach during the incubation fast. May also be present during infection. In Aptenodytes patagonicus (King penguin), this protein is Spheniscin-1.